A 381-amino-acid chain; its full sequence is Phenylalanine dehydrogenase (381 aa).

Residue arginine 55 coordinates NAD(+). Lysine 79 serves as a coordination point for L-phenylalanine. The active site involves lysine 91. Residues aspartate 126, serine 157, threonine 161, 191 to 197, 214 to 215, 254 to 255, and 275 to 277 each bind NAD(+); these read GLGKVGY, DI, AM, and SAN. L-phenylalanine is bound at residue asparagine 277.

It belongs to the Glu/Leu/Phe/Val dehydrogenases family.

It carries out the reaction L-phenylalanine + NAD(+) + H2O = 3-phenylpyruvate + NH4(+) + NADH + H(+). It participates in amino-acid biosynthesis; L-phenylalanine biosynthesis; L-phenylalanine from phenylpyruvate (PDH route): step 1/1. Functionally, catalyzes the reversible NAD(+)-dependent oxidative deamination of L-phenylalanine to phenylpyruvate. In Lysinibacillus sphaericus (Bacillus sphaericus), this protein is Phenylalanine dehydrogenase.